A 327-amino-acid chain; its full sequence is FERM domain-containing protein 6 (327 aa).

The 305-residue stretch at Arg16 to Gln320 folds into the FERM domain.

It localises to the cytoplasm. It is found in the cell membrane. This chain is FERM domain-containing protein 6 (Frmd6), found in Rattus norvegicus (Rat).